The chain runs to 179 residues: Large ribosomal subunit protein uL5 (179 aa).

Belongs to the universal ribosomal protein uL5 family. In terms of assembly, part of the 50S ribosomal subunit; part of the 5S rRNA/L5/L18/L25 subcomplex. Contacts the 5S rRNA and the P site tRNA. Forms a bridge to the 30S subunit in the 70S ribosome.

Functionally, this is one of the proteins that bind and probably mediate the attachment of the 5S RNA into the large ribosomal subunit, where it forms part of the central protuberance. In the 70S ribosome it contacts protein S13 of the 30S subunit (bridge B1b), connecting the 2 subunits; this bridge is implicated in subunit movement. Contacts the P site tRNA; the 5S rRNA and some of its associated proteins might help stabilize positioning of ribosome-bound tRNAs. This is Large ribosomal subunit protein uL5 from Thiobacillus denitrificans (strain ATCC 25259 / T1).